Reading from the N-terminus, the 201-residue chain is Dephospho-CoA kinase (201 aa).

The 198-residue stretch at 4-201 (VIGLTGGIAS…LLDTWSNIEK (198 aa)) folds into the DPCK domain. ATP is bound at residue 12 to 17 (ASGKST).

It belongs to the CoaE family.

The protein localises to the cytoplasm. The catalysed reaction is 3'-dephospho-CoA + ATP = ADP + CoA + H(+). Its pathway is cofactor biosynthesis; coenzyme A biosynthesis; CoA from (R)-pantothenate: step 5/5. Functionally, catalyzes the phosphorylation of the 3'-hydroxyl group of dephosphocoenzyme A to form coenzyme A. In Bacillus licheniformis (strain ATCC 14580 / DSM 13 / JCM 2505 / CCUG 7422 / NBRC 12200 / NCIMB 9375 / NCTC 10341 / NRRL NRS-1264 / Gibson 46), this protein is Dephospho-CoA kinase.